A 267-amino-acid polypeptide reads, in one-letter code: DCN1-like protein 2 (267 aa).

A disordered region spans residues 1 to 48 (MTRKYTKKSSGSTASTTNSTAEIVDLTTSTSSVGKKRKSPDEKAQPIT). A compositionally biased stretch (low complexity) spans 8 to 21 (KSSGSTASTTNSTA). Residues 75–262 (HYTYLYTYIF…LLDQFSEWVQ (188 aa)) form the DCUN1 domain.

This chain is DCN1-like protein 2, found in Dictyostelium discoideum (Social amoeba).